The sequence spans 721 residues: Glycine--tRNA ligase beta subunit (721 aa).

The protein belongs to the class-II aminoacyl-tRNA synthetase family. In terms of assembly, tetramer of two alpha and two beta subunits.

The protein localises to the cytoplasm. The enzyme catalyses tRNA(Gly) + glycine + ATP = glycyl-tRNA(Gly) + AMP + diphosphate. This Sinorhizobium medicae (strain WSM419) (Ensifer medicae) protein is Glycine--tRNA ligase beta subunit.